The chain runs to 211 residues: MTFDRRRASELQRKLSELVKEEDCFDPEAVEAVGGLDVSYKGDVGVSALSLIDYKTLRPLKHYYVVARVPIPYVPGFLAFREAPLHLTLIKKVKGYDLLLVDGHGRTHPRGLGIASHVGVTSGVPTVGVAKRRLVGEEERCGERECLVHEGKVVAYVIRRGKQKLYVSVGHCVSLETAYQIVKRLTVRRLPEPIAWADRISRSLARSLQLP.

Residues aspartate 37 and aspartate 102 each contribute to the Mg(2+) site.

It belongs to the endonuclease V family. Requires Mg(2+) as cofactor.

The protein resides in the cytoplasm. It carries out the reaction Endonucleolytic cleavage at apurinic or apyrimidinic sites to products with a 5'-phosphate.. Its function is as follows. DNA repair enzyme involved in the repair of deaminated bases. Selectively cleaves double-stranded DNA at the second phosphodiester bond 3' to a deoxyinosine leaving behind the intact lesion on the nicked DNA. The polypeptide is Endonuclease V (Ignicoccus hospitalis (strain KIN4/I / DSM 18386 / JCM 14125)).